A 145-amino-acid chain; its full sequence is LIM domain only protein 3 (145 aa).

2 LIM zinc-binding domains span residues 11 to 73 (KGCA…LFGT) and 75 to 137 (GNCA…GLMK).

The chain is LIM domain only protein 3 (Lmo3) from Rattus norvegicus (Rat).